The chain runs to 295 residues: Probable protein phosphatase 2C 6 (295 aa).

In terms of domain architecture, PPM-type phosphatase spans 23-294; it reads QYAATHMQGW…DNMTCILIQF (272 aa). Mn(2+) is bound by residues D57, G58, D237, and D285.

This sequence belongs to the PP2C family. Requires Mg(2+) as cofactor. It depends on Mn(2+) as a cofactor.

It is found in the membrane. The catalysed reaction is O-phospho-L-seryl-[protein] + H2O = L-seryl-[protein] + phosphate. It carries out the reaction O-phospho-L-threonyl-[protein] + H2O = L-threonyl-[protein] + phosphate. Functionally, enzyme with a broad specificity. In Paramecium tetraurelia, this protein is Probable protein phosphatase 2C 6.